Reading from the N-terminus, the 320-residue chain is o-succinylbenzoate synthase (320 aa).

The Proton donor role is filled by Lys-133. Mg(2+)-binding residues include Asp-161, Glu-190, and Asp-213. Catalysis depends on Lys-235, which acts as the Proton acceptor.

The protein belongs to the mandelate racemase/muconate lactonizing enzyme family. MenC type 1 subfamily. Requires a divalent metal cation as cofactor.

The catalysed reaction is (1R,6R)-6-hydroxy-2-succinyl-cyclohexa-2,4-diene-1-carboxylate = 2-succinylbenzoate + H2O. It functions in the pathway quinol/quinone metabolism; 1,4-dihydroxy-2-naphthoate biosynthesis; 1,4-dihydroxy-2-naphthoate from chorismate: step 4/7. Its pathway is quinol/quinone metabolism; menaquinone biosynthesis. Its function is as follows. Converts 2-succinyl-6-hydroxy-2,4-cyclohexadiene-1-carboxylate (SHCHC) to 2-succinylbenzoate (OSB). This is o-succinylbenzoate synthase from Escherichia coli O7:K1 (strain IAI39 / ExPEC).